The primary structure comprises 293 residues: Pantothenate synthetase (293 aa).

30 to 37 (MGYLHKGH) provides a ligand contact to ATP. Catalysis depends on His37, which acts as the Proton donor. Gln61 is a binding site for (R)-pantoate. Residue Gln61 participates in beta-alanine binding. 147-150 (GEKD) serves as a coordination point for ATP. Gln153 serves as a coordination point for (R)-pantoate. Residues Val176 and 184–187 (CSSR) each bind ATP.

It belongs to the pantothenate synthetase family. Homodimer.

It localises to the cytoplasm. It carries out the reaction (R)-pantoate + beta-alanine + ATP = (R)-pantothenate + AMP + diphosphate + H(+). It participates in cofactor biosynthesis; (R)-pantothenate biosynthesis; (R)-pantothenate from (R)-pantoate and beta-alanine: step 1/1. Catalyzes the condensation of pantoate with beta-alanine in an ATP-dependent reaction via a pantoyl-adenylate intermediate. The polypeptide is Pantothenate synthetase (Brucella canis (strain ATCC 23365 / NCTC 10854 / RM-666)).